A 517-amino-acid chain; its full sequence is Cytochrome P450 1A1 (517 aa).

The interval 34-45 is mitochondrial targeting signal; it reads WQPRVPKGLKSP. O-linked (GlcNAc) serine glycosylation is present at Ser72. Substrate is bound at residue Phe229. Position 462 (Cys462) interacts with heme.

It belongs to the cytochrome P450 family. Interacts with cytosolic chaperones HSP70 and HSP90; this interaction is required for initial targeting to mitochondria. Interacts (via mitochondrial targeting signal) with TOMM40 (via N-terminus); this interaction is required for translocation across the mitochondrial outer membrane. Heme is required as a cofactor.

The protein resides in the endoplasmic reticulum membrane. The protein localises to the mitochondrion inner membrane. It is found in the microsome membrane. Its subcellular location is the cytoplasm. The enzyme catalyses an organic molecule + reduced [NADPH--hemoprotein reductase] + O2 = an alcohol + oxidized [NADPH--hemoprotein reductase] + H2O + H(+). The catalysed reaction is estrone + reduced [NADPH--hemoprotein reductase] + O2 = 2-hydroxyestrone + oxidized [NADPH--hemoprotein reductase] + H2O + H(+). It carries out the reaction estrone + reduced [NADPH--hemoprotein reductase] + O2 = 4-hydroxyestrone + oxidized [NADPH--hemoprotein reductase] + H2O + H(+). It catalyses the reaction estrone + reduced [NADPH--hemoprotein reductase] + O2 = 6alpha-hydroxyestrone + oxidized [NADPH--hemoprotein reductase] + H2O + H(+). The enzyme catalyses estrone + reduced [NADPH--hemoprotein reductase] + O2 = 15alpha-hydroxyestrone + oxidized [NADPH--hemoprotein reductase] + H2O + H(+). The catalysed reaction is estrone + reduced [NADPH--hemoprotein reductase] + O2 = 16alpha-hydroxyestrone + oxidized [NADPH--hemoprotein reductase] + H2O + H(+). It carries out the reaction 17beta-estradiol + reduced [NADPH--hemoprotein reductase] + O2 = 2-hydroxy-17beta-estradiol + oxidized [NADPH--hemoprotein reductase] + H2O + H(+). It catalyses the reaction 17beta-estradiol + reduced [NADPH--hemoprotein reductase] + O2 = 4-hydroxy-17beta-estradiol + oxidized [NADPH--hemoprotein reductase] + H2O + H(+). The enzyme catalyses 17beta-estradiol + reduced [NADPH--hemoprotein reductase] + O2 = 6alpha-hydroxy-17beta-estradiol + oxidized [NADPH--hemoprotein reductase] + H2O + H(+). The catalysed reaction is 17beta-estradiol + reduced [NADPH--hemoprotein reductase] + O2 = 7alpha-hydroxy-17beta-estradiol + oxidized [NADPH--hemoprotein reductase] + H2O + H(+). It carries out the reaction 17beta-estradiol + reduced [NADPH--hemoprotein reductase] + O2 = 15alpha-hydroxy-17beta-estradiol + oxidized [NADPH--hemoprotein reductase] + H2O + H(+). It catalyses the reaction (5Z,8Z,11Z)-eicosatrienoate + reduced [NADPH--hemoprotein reductase] + O2 = 19-hydroxy-(5Z,8Z,11Z)-eicosatrienoate + oxidized [NADPH--hemoprotein reductase] + H2O + H(+). The enzyme catalyses (5Z,8Z,11Z,14Z)-eicosatetraenoate + reduced [NADPH--hemoprotein reductase] + O2 = 16-hydroxy-(5Z,8Z,11Z,14Z)-eicosatetraenoate + oxidized [NADPH--hemoprotein reductase] + H2O + H(+). The catalysed reaction is (5Z,8Z,11Z,14Z)-eicosatetraenoate + reduced [NADPH--hemoprotein reductase] + O2 = 17-hydroxy-(5Z,8Z,11Z,14Z)-eicosatetraenoate + oxidized [NADPH--hemoprotein reductase] + H2O + H(+). It carries out the reaction (5Z,8Z,11Z,14Z)-eicosatetraenoate + reduced [NADPH--hemoprotein reductase] + O2 = 18-hydroxy-(5Z,8Z,11Z,14Z)-eicosatetraenoate + oxidized [NADPH--hemoprotein reductase] + H2O + H(+). It catalyses the reaction (5Z,8Z,11Z,14Z)-eicosatetraenoate + reduced [NADPH--hemoprotein reductase] + O2 = 19-hydroxy-(5Z,8Z,11Z,14Z)-eicosatetraenoate + oxidized [NADPH--hemoprotein reductase] + H2O + H(+). The enzyme catalyses (5Z,8Z,11Z,14Z,17Z)-eicosapentaenoate + reduced [NADPH--hemoprotein reductase] + O2 = 19-hydroxy-(5Z,8Z,11Z,14Z,17Z)-eicosapentaenoate + oxidized [NADPH--hemoprotein reductase] + H2O + H(+). The catalysed reaction is (5Z,8Z,11Z,14Z)-eicosatetraenoate + reduced [NADPH--hemoprotein reductase] + O2 = (8R,9S)-epoxy-(5Z,11Z,14Z)-eicosatrienoate + oxidized [NADPH--hemoprotein reductase] + H2O + H(+). It carries out the reaction (5Z,8Z,11Z,14Z)-eicosatetraenoate + reduced [NADPH--hemoprotein reductase] + O2 = (11R,12S)-epoxy-(5Z,8Z,14Z)-eicosatrienoate + oxidized [NADPH--hemoprotein reductase] + H2O + H(+). It catalyses the reaction (5Z,8Z,11Z,14Z)-eicosatetraenoate + reduced [NADPH--hemoprotein reductase] + O2 = (14S,15R)-epoxy-(5Z,8Z,11Z)-eicosatrienoate + oxidized [NADPH--hemoprotein reductase] + H2O + H(+). The enzyme catalyses (5Z,8Z,11Z,14Z)-eicosatetraenoate + reduced [NADPH--hemoprotein reductase] + O2 = (14R,15S)-epoxy-(5Z,8Z,11Z)-eicosatrienoate + oxidized [NADPH--hemoprotein reductase] + H2O + H(+). The catalysed reaction is (5Z,8Z,11Z,14Z,17Z)-eicosapentaenoate + reduced [NADPH--hemoprotein reductase] + O2 = (17R,18S)-epoxy-(5Z,8Z,11Z,14Z)-eicosatetraenoate + oxidized [NADPH--hemoprotein reductase] + H2O + H(+). It carries out the reaction (4Z,7Z,10Z,13Z,16Z,19Z)-docosahexaenoate + reduced [NADPH--hemoprotein reductase] + O2 = (19S,20R)-epoxy-(4Z,7Z,10Z,13Z,16Z)-docosapentaenoate + oxidized [NADPH--hemoprotein reductase] + H2O + H(+). It catalyses the reaction (4Z,7Z,10Z,13Z,16Z,19Z)-docosahexaenoate + reduced [NADPH--hemoprotein reductase] + O2 = (19R,20S)-epoxy-(4Z,7Z,10Z,13Z,16Z)-docosapentaenoate + oxidized [NADPH--hemoprotein reductase] + H2O + H(+). The enzyme catalyses all-trans-retinol + reduced [NADPH--hemoprotein reductase] + O2 = all-trans-retinal + oxidized [NADPH--hemoprotein reductase] + 2 H2O + H(+). The catalysed reaction is all-trans-retinal + reduced [NADPH--hemoprotein reductase] + O2 = all-trans-retinoate + oxidized [NADPH--hemoprotein reductase] + H2O + 2 H(+). It carries out the reaction (13S)-hydroperoxy-(9Z,11E)-octadecadienoate = 13-oxo-(9Z,11E)-octadecadienoate + H2O. It catalyses the reaction (12S)-hydroperoxy-(5Z,8Z,10E,14Z)-eicosatetraenoate = 12-oxo-(5Z,8Z,10E,14Z)-eicosatetraenoate + H2O. The enzyme catalyses (15S)-hydroperoxy-(5Z,8Z,11Z,13E)-eicosatetraenoate = 15-oxo-(5Z,8Z,11Z,13E)-eicosatetraenoate + H2O. The catalysed reaction is (5S)-hydroperoxy-(6E,8Z,11Z,14Z)-eicosatetraenoate = 5-oxo-(6E,8Z,11Z,14Z)-eicosatetraenoate + H2O. It participates in steroid hormone biosynthesis. Its pathway is lipid metabolism; fatty acid metabolism. The protein operates within cofactor metabolism; retinol metabolism. Functionally, a cytochrome P450 monooxygenase involved in the metabolism of various endogenous substrates, including fatty acids, steroid hormones and vitamins. Mechanistically, uses molecular oxygen inserting one oxygen atom into a substrate, and reducing the second into a water molecule, with two electrons provided by NADPH via cytochrome P450 reductase (CPR; NADPH-ferrihemoprotein reductase). Catalyzes the hydroxylation of carbon-hydrogen bonds. Exhibits high catalytic activity for the formation of hydroxyestrogens from estrone (E1) and 17beta-estradiol (E2), namely 2-hydroxy E1 and E2, as well as D-ring hydroxylated E1 and E2 at the C15alpha and C16alpha positions. Displays different regioselectivities for polyunsaturated fatty acids (PUFA) hydroxylation. Catalyzes the epoxidation of double bonds of certain PUFA. Converts arachidonic acid toward epoxyeicosatrienoic acid (EET) regioisomers, 8,9-, 11,12-, and 14,15-EET, that function as lipid mediators in the vascular system. Displays an absolute stereoselectivity in the epoxidation of eicosapentaenoic acid (EPA) producing the 17(R),18(S) enantiomer. May play an important role in all-trans retinoic acid biosynthesis in extrahepatic tissues. Catalyzes two successive oxidative transformation of all-trans retinol to all-trans retinal and then to the active form all-trans retinoic acid. May also participate in eicosanoids metabolism by converting hydroperoxide species into oxo metabolites (lipoxygenase-like reaction, NADPH-independent). The chain is Cytochrome P450 1A1 (CYP1A1) from Felis catus (Cat).